We begin with the raw amino-acid sequence, 367 residues long: D-alanine--D-alanine ligase (367 aa).

Residues 145–351 (KRLLRDAGLP…QPALMDELVA (207 aa)) enclose the ATP-grasp domain. An ATP-binding site is contributed by 174 to 229 (RAVGSSELFVKPANLGSSVGISKTRDAAEFEAACQLALRFDRKILIERCIAPVREI). The Mg(2+) site is built by D306, E318, and N320.

Belongs to the D-alanine--D-alanine ligase family. Mg(2+) is required as a cofactor. It depends on Mn(2+) as a cofactor.

It localises to the cytoplasm. The enzyme catalyses 2 D-alanine + ATP = D-alanyl-D-alanine + ADP + phosphate + H(+). Its pathway is cell wall biogenesis; peptidoglycan biosynthesis. Functionally, cell wall formation. This Bradyrhizobium sp. (strain ORS 278) protein is D-alanine--D-alanine ligase.